We begin with the raw amino-acid sequence, 63 residues long: Putative transmembrane protein ORF63 (63 aa).

Residues 1–8 are Extracellular-facing; that stretch reads MQSGNFTL. The chain crosses the membrane as a helical span at residues 9 to 29; that stretch reads EVIMYLINSILAFIMIFFTFV. Topologically, residues 30–31 are cytoplasmic; it reads NP. Residues 32-52 traverse the membrane as a helical segment; it reads SLLKCQYWTYILVALITAIIF. Topologically, residues 53-63 are extracellular; it reads HTGSKVGKSSG.

The protein localises to the host membrane. The sequence is that of Putative transmembrane protein ORF63 from Acidianus filamentous virus 1 (isolate United States/Yellowstone) (AFV-1).